The primary structure comprises 335 residues: 4-hydroxy-3-methylbut-2-enyl diphosphate reductase (335 aa).

Residue Cys-21 participates in [4Fe-4S] cluster binding. The (2E)-4-hydroxy-3-methylbut-2-enyl diphosphate site is built by His-50 and His-86. Residues His-50 and His-86 each coordinate dimethylallyl diphosphate. The isopentenyl diphosphate site is built by His-50 and His-86. Residue Cys-108 participates in [4Fe-4S] cluster binding. Residue His-136 coordinates (2E)-4-hydroxy-3-methylbut-2-enyl diphosphate. Residue His-136 participates in dimethylallyl diphosphate binding. His-136 is an isopentenyl diphosphate binding site. The active-site Proton donor is the Glu-138. Thr-177 serves as a coordination point for (2E)-4-hydroxy-3-methylbut-2-enyl diphosphate. Position 207 (Cys-207) interacts with [4Fe-4S] cluster. (2E)-4-hydroxy-3-methylbut-2-enyl diphosphate is bound by residues Ser-235, Ser-236, Asn-237, and Ser-280. Positions 235, 236, 237, and 280 each coordinate dimethylallyl diphosphate. Isopentenyl diphosphate contacts are provided by Ser-235, Ser-236, Asn-237, and Ser-280.

The protein belongs to the IspH family. [4Fe-4S] cluster serves as cofactor.

It carries out the reaction isopentenyl diphosphate + 2 oxidized [2Fe-2S]-[ferredoxin] + H2O = (2E)-4-hydroxy-3-methylbut-2-enyl diphosphate + 2 reduced [2Fe-2S]-[ferredoxin] + 2 H(+). The catalysed reaction is dimethylallyl diphosphate + 2 oxidized [2Fe-2S]-[ferredoxin] + H2O = (2E)-4-hydroxy-3-methylbut-2-enyl diphosphate + 2 reduced [2Fe-2S]-[ferredoxin] + 2 H(+). It functions in the pathway isoprenoid biosynthesis; dimethylallyl diphosphate biosynthesis; dimethylallyl diphosphate from (2E)-4-hydroxy-3-methylbutenyl diphosphate: step 1/1. The protein operates within isoprenoid biosynthesis; isopentenyl diphosphate biosynthesis via DXP pathway; isopentenyl diphosphate from 1-deoxy-D-xylulose 5-phosphate: step 6/6. Functionally, catalyzes the conversion of 1-hydroxy-2-methyl-2-(E)-butenyl 4-diphosphate (HMBPP) into a mixture of isopentenyl diphosphate (IPP) and dimethylallyl diphosphate (DMAPP). Acts in the terminal step of the DOXP/MEP pathway for isoprenoid precursor biosynthesis. The polypeptide is 4-hydroxy-3-methylbut-2-enyl diphosphate reductase (Rhizobium rhizogenes (strain K84 / ATCC BAA-868) (Agrobacterium radiobacter)).